Reading from the N-terminus, the 559-residue chain is Glucose-6-phosphate isomerase 2 (559 aa).

The Proton donor role is filled by glutamate 367. Catalysis depends on residues histidine 398 and lysine 522.

This sequence belongs to the GPI family.

Its subcellular location is the cytoplasm. It catalyses the reaction alpha-D-glucose 6-phosphate = beta-D-fructose 6-phosphate. Its pathway is carbohydrate biosynthesis; gluconeogenesis. The protein operates within carbohydrate degradation; glycolysis; D-glyceraldehyde 3-phosphate and glycerone phosphate from D-glucose: step 2/4. Its function is as follows. Catalyzes the reversible isomerization of glucose-6-phosphate to fructose-6-phosphate. The sequence is that of Glucose-6-phosphate isomerase 2 from Chromohalobacter salexigens (strain ATCC BAA-138 / DSM 3043 / CIP 106854 / NCIMB 13768 / 1H11).